We begin with the raw amino-acid sequence, 343 residues long: Tetraacyldisaccharide 4'-kinase (343 aa).

55–62 (TVGGEGKT) contributes to the ATP binding site.

This sequence belongs to the LpxK family.

It catalyses the reaction a lipid A disaccharide + ATP = a lipid IVA + ADP + H(+). It participates in glycolipid biosynthesis; lipid IV(A) biosynthesis; lipid IV(A) from (3R)-3-hydroxytetradecanoyl-[acyl-carrier-protein] and UDP-N-acetyl-alpha-D-glucosamine: step 6/6. Functionally, transfers the gamma-phosphate of ATP to the 4'-position of a tetraacyldisaccharide 1-phosphate intermediate (termed DS-1-P) to form tetraacyldisaccharide 1,4'-bis-phosphate (lipid IVA). The polypeptide is Tetraacyldisaccharide 4'-kinase (Chelativorans sp. (strain BNC1)).